The chain runs to 336 residues: Filaggrin (336 aa).

The tract at residues 1-313 (PDGSGRSSNR…GVQGAAASGQ (313 aa)) is disordered. 3 stretches are compositionally biased toward low complexity: residues 16 to 26 (QLSPSQSSDSQ), 40 to 66 (SSSANRRAGSSSGSGVQGASAGGLAAD), and 73 to 98 (ARQGQASAQGRAGSQGQAQGRVSSSA). Composition is skewed to basic and acidic residues over residues 100–120 (RQGRRGVSESRASDSEGHSDF), 163–176 (DSQHQHGHQHEQQR), and 184–195 (HQHEHEQPESGH). Positions 285 to 311 (AQRGQSSSANRRAGSSSGSGVQGAAAS) are enriched in low complexity.

It belongs to the S100-fused protein family. Post-translationally, filaggrin is initially synthesized as a large, insoluble, highly phosphorylated precursor containing many tandem copies of 248 AA, which are not separated by large linker sequences. During terminal differentiation it is dephosphorylated and proteolytically cleaved. Expressed in the granular layer of the epidermis (at protein level). Expressed in the epidermis of the ear (at protein level).

The protein resides in the cytoplasmic granule. In terms of biological role, aggregates keratin intermediate filaments and promotes disulfide-bond formation among the intermediate filaments during terminal differentiation of mammalian epidermis. In Mus musculus (Mouse), this protein is Filaggrin (Flg).